The sequence spans 159 residues: Protein Smg homolog (159 aa).

It belongs to the Smg family.

The sequence is that of Protein Smg homolog from Shewanella amazonensis (strain ATCC BAA-1098 / SB2B).